Consider the following 225-residue polypeptide: Cytochrome c oxidase subunit 2 (225 aa).

Residues 1–25 lie on the Mitochondrial intermembrane side of the membrane; it reads MSTWMMFMFQESNSFYADNLVSFHN. A helical membrane pass occupies residues 26–47; sequence LVMMIIIMISTLTIYIIFDLFM. Topologically, residues 48 to 62 are mitochondrial matrix; it reads NKFSNLFLLKNHNIE. The helical transmembrane segment at 63–82 threads the bilayer; that stretch reads IIWTIVPIVILLIICFPSLK. The Mitochondrial intermembrane portion of the chain corresponds to 83–225; the sequence is ILYLIDEIIN…FFLNWINKQN (143 aa). Cu cation is bound by residues H159, C194, E196, C198, H202, and M205. E196 is a binding site for Mg(2+).

Belongs to the cytochrome c oxidase subunit 2 family. Component of the cytochrome c oxidase (complex IV, CIV), a multisubunit enzyme composed of a catalytic core of 3 subunits and several supernumerary subunits. The complex exists as a monomer or a dimer and forms supercomplexes (SCs) in the inner mitochondrial membrane with ubiquinol-cytochrome c oxidoreductase (cytochrome b-c1 complex, complex III, CIII). Cu cation serves as cofactor.

The protein localises to the mitochondrion inner membrane. The enzyme catalyses 4 Fe(II)-[cytochrome c] + O2 + 8 H(+)(in) = 4 Fe(III)-[cytochrome c] + 2 H2O + 4 H(+)(out). Functionally, component of the cytochrome c oxidase, the last enzyme in the mitochondrial electron transport chain which drives oxidative phosphorylation. The respiratory chain contains 3 multisubunit complexes succinate dehydrogenase (complex II, CII), ubiquinol-cytochrome c oxidoreductase (cytochrome b-c1 complex, complex III, CIII) and cytochrome c oxidase (complex IV, CIV), that cooperate to transfer electrons derived from NADH and succinate to molecular oxygen, creating an electrochemical gradient over the inner membrane that drives transmembrane transport and the ATP synthase. Cytochrome c oxidase is the component of the respiratory chain that catalyzes the reduction of oxygen to water. Electrons originating from reduced cytochrome c in the intermembrane space (IMS) are transferred via the dinuclear copper A center (CU(A)) of subunit 2 and heme A of subunit 1 to the active site in subunit 1, a binuclear center (BNC) formed by heme A3 and copper B (CU(B)). The BNC reduces molecular oxygen to 2 water molecules using 4 electrons from cytochrome c in the IMS and 4 protons from the mitochondrial matrix. This is Cytochrome c oxidase subunit 2 (COII) from Apis koschevnikovi (Koschevnikov's honey bee).